Reading from the N-terminus, the 427-residue chain is UBX domain-containing protein 10 (427 aa).

Positions 247–311 form a coiled coil; sequence LERFRSEREA…VQKKKKQYRA (65 aa). A UBX domain is found at 323-425; the sequence is SEDEPARLSI…FPNGTVVVEL (103 aa).

The protein resides in the endoplasmic reticulum. Functionally, involved in protein degradation through the ubiquitin/proteasome pathway. The sequence is that of UBX domain-containing protein 10 (ucp10) from Schizosaccharomyces pombe (strain 972 / ATCC 24843) (Fission yeast).